A 274-amino-acid polypeptide reads, in one-letter code: Small ribosomal subunit biogenesis GTPase RsgA (274 aa).

Residues 58-215 (KNYLNRPKVA…LVDSPGFSIY (158 aa)) enclose the CP-type G domain. Residues 108 to 111 (SKLD) and 158 to 166 (GHSGVGKST) each bind GTP. 4 residues coordinate Zn(2+): cysteine 238, cysteine 243, histidine 245, and cysteine 252.

This sequence belongs to the TRAFAC class YlqF/YawG GTPase family. RsgA subfamily. As to quaternary structure, monomer. Associates with 30S ribosomal subunit, binds 16S rRNA. The cofactor is Zn(2+).

The protein resides in the cytoplasm. In terms of biological role, one of several proteins that assist in the late maturation steps of the functional core of the 30S ribosomal subunit. Helps release RbfA from mature subunits. May play a role in the assembly of ribosomal proteins into the subunit. Circularly permuted GTPase that catalyzes slow GTP hydrolysis, GTPase activity is stimulated by the 30S ribosomal subunit. In Mycoplasmoides gallisepticum (strain R(low / passage 15 / clone 2)) (Mycoplasma gallisepticum), this protein is Small ribosomal subunit biogenesis GTPase RsgA.